The following is a 477-amino-acid chain: Myc-associated zinc finger protein (477 aa).

Disordered regions lie at residues 59–78 and 121–144; these read AQSPFQAAPAPPPTPQAPAA and TVDTAALKQPPAPPPPPPAVSAPA. Residues 130–140 show a composition bias toward pro residues; sequence PPAPPPPPPAV. 4 consecutive C2H2-type zinc fingers follow at residues 190-212, 279-301, 307-329, and 337-360; these read YICALCAKEFKNGYNLRRHEAIH, HACEMCGKAFRDVYHLNRHKLSH, YQCPVCQQRFKRKDRMSYHVRSH, and YNCSHCGKSFSRPDHLNSHVRQVH. Residue Ser361 is modified to Phosphoserine. The C2H2-type 5 zinc-finger motif lies at 366–388; the sequence is FKCEKCEAAFATKDRLRAHTVRH. The C2H2-type 6; atypical zinc-finger motif lies at 392-413; it reads VPCHVCGKMLSSAYISDHMKVH.

In terms of assembly, interacts with BPTF. As to expression, expressed in Purkinje cells in the brain (at protein level).

It is found in the nucleus. Transcriptional regulator. Acts as a transcriptional activator that binds to purine-rich GAGA sites found in the promoter of many genes including insulin I and II and islet amyloid polypeptide. The polypeptide is Myc-associated zinc finger protein (Maz) (Mus musculus (Mouse)).